Here is a 234-residue protein sequence, read N- to C-terminus: Peptidase E (234 aa).

Residues Ser123, Asp138, and His160 each act as charge relay system in the active site.

The protein belongs to the peptidase S51 family.

It is found in the cytoplasm. It catalyses the reaction Dipeptidase E catalyzes the hydrolysis of dipeptides Asp-|-Xaa. It does not act on peptides with N-terminal Glu, Asn or Gln, nor does it cleave isoaspartyl peptides.. Functionally, hydrolyzes dipeptides containing N-terminal aspartate residues. May play a role in allowing the cell to use peptide aspartate to spare carbon otherwise required for the synthesis of the aspartate family of amino acids. The sequence is that of Peptidase E from Haemophilus influenzae (strain PittGG).